The chain runs to 339 residues: uncharacterized protein (339 aa).

Residues Ile-54, Lys-78, Asp-101, Asn-128, Tyr-213, and Lys-217 each coordinate NADP(+). Residue Tyr-213 is the Proton donor of the active site. Lys-217 functions as the Lowers pKa of active site Tyr in the catalytic mechanism.

This sequence belongs to the short-chain dehydrogenases/reductases (SDR) family.

This is an uncharacterized protein from Schizosaccharomyces pombe (strain 972 / ATCC 24843) (Fission yeast).